The sequence spans 208 residues: N-(5'-phosphoribosyl)anthranilate isomerase (208 aa).

Belongs to the TrpF family.

It catalyses the reaction N-(5-phospho-beta-D-ribosyl)anthranilate = 1-(2-carboxyphenylamino)-1-deoxy-D-ribulose 5-phosphate. It participates in amino-acid biosynthesis; L-tryptophan biosynthesis; L-tryptophan from chorismate: step 3/5. The sequence is that of N-(5'-phosphoribosyl)anthranilate isomerase from Pyrococcus furiosus (strain ATCC 43587 / DSM 3638 / JCM 8422 / Vc1).